The sequence spans 213 residues: Ras-related protein Rab-39B (213 aa).

GTP is bound by residues S17, G20, K21, S22, C23, S37, and T40. S22 is a Mg(2+) binding site. The segment at 35 to 43 (QVSDPTVGV) is switch-I. The Mg(2+) site is built by T40 and D64. GTP is bound by residues G67, H123, K124, D126, A154, and R155. Residues 67–83 (GQERFRSITRAYYRNSV) are switch-II. Position 201 is a phosphoserine (S201). S-geranylgeranyl cysteine attachment occurs at residues C211 and C213. Residue C213 is modified to Cysteine methyl ester.

The protein belongs to the small GTPase superfamily. Rab family. As to quaternary structure, interacts (GDP-bound) with C9orf72; C9orf72 in complex with SMCR8 acts as a GEF for RAB39B. Interacts (in GTP-bound form) with PICK1 (via PDZ domain); a PICK1 homodimer may allow simultaneous association of RAB39B and GRIA2 to PICK1 which is involved in GRIA2 trafficking. Interacts with isoform c of RASSF1; the interaction is strong. Interacts with isoform a of RASSF1; the interaction is weak. Interacts with the DLG4/PSD-95. Interacts (GTP-bound) with HOPS complex components VPS39 and VPS41. Mg(2+) serves as cofactor. Highly expressed in the brain.

The protein localises to the cell membrane. It localises to the cytoplasmic vesicle membrane. The protein resides in the golgi apparatus. It is found in the cytoplasmic vesicle. Its subcellular location is the autophagosome membrane. The protein localises to the autolysosome membrane. It catalyses the reaction GTP + H2O = GDP + phosphate + H(+). With respect to regulation, regulated by guanine nucleotide exchange factors (GEFs) including C9orf72-SMCR8 complex, which promote the exchange of bound GDP for free GTP. Regulated by GTPase activating proteins (GAPs) which increase the GTP hydrolysis activity. Inhibited by GDP dissociation inhibitors (GDIs). Its function is as follows. The small GTPases Rab are key regulators of intracellular membrane trafficking, from the formation of transport vesicles to their fusion with membranes. Rabs cycle between an inactive GDP-bound form and an active GTP-bound form that is able to recruit to membranes different sets of downstream effectors directly responsible for vesicle formation, movement, tethering and fusion. RAB39B is involved in autophagy and may function in autophagosome formation. Binds downstream effector PICK1 to ensure selectively GRIA2 exit from the endoplasmic reticulum to the Golgi and to regulate AMPAR composition at the post-synapses and thus synaptic transmission. May regulate the homeostasis of SNCA/alpha-synuclein. The chain is Ras-related protein Rab-39B from Homo sapiens (Human).